The primary structure comprises 175 residues: ATP-dependent protease subunit HslV (175 aa).

T2 is a catalytic residue. Na(+) is bound by residues G158, C161, and T164.

It belongs to the peptidase T1B family. HslV subfamily. A double ring-shaped homohexamer of HslV is capped on each side by a ring-shaped HslU homohexamer. The assembly of the HslU/HslV complex is dependent on binding of ATP.

The protein localises to the cytoplasm. The enzyme catalyses ATP-dependent cleavage of peptide bonds with broad specificity.. Allosterically activated by HslU binding. Functionally, protease subunit of a proteasome-like degradation complex believed to be a general protein degrading machinery. This Haemophilus influenzae (strain PittGG) protein is ATP-dependent protease subunit HslV.